Here is a 136-residue protein sequence, read N- to C-terminus: Small ribosomal subunit protein eS6 (136 aa).

The protein belongs to the eukaryotic ribosomal protein eS6 family.

The chain is Small ribosomal subunit protein eS6 from Methanosarcina mazei (strain ATCC BAA-159 / DSM 3647 / Goe1 / Go1 / JCM 11833 / OCM 88) (Methanosarcina frisia).